We begin with the raw amino-acid sequence, 740 residues long: ATP-dependent zinc metalloprotease YME1L (740 aa).

Residues 1–256 (MFSTTTHSVP…KSGKTMKYLK (256 aa)) are Mitochondrial matrix-facing. A helical transmembrane segment spans residues 257 to 277 (TLQTIVVIVVFLGIFLSFFTT). The Mitochondrial intermembrane segment spans residues 278 to 740 (SNGSVFRSIQ…IKAILNESQT (463 aa)). ATP is bound at residue 347-351 (GTGKT). Histidine 563 provides a ligand contact to Zn(2+). Glutamate 564 is an active-site residue. 2 residues coordinate Zn(2+): histidine 567 and aspartate 641.

In the N-terminal section; belongs to the AAA ATPase family. This sequence in the C-terminal section; belongs to the peptidase M41 family. Requires Zn(2+) as cofactor.

It localises to the mitochondrion inner membrane. ATP-dependent metalloprotease that catalyzes the degradation of folded and unfolded proteins with a suitable degron sequence in the mitochondrial intermembrane region. Plays an important role in regulating mitochondrial morphology and function by cleaving Opa1, giving rise to a form of Opa1 that promotes maintenance of normal mitochondrial structure and mitochondrial protein metabolism. Ensures cell proliferation, maintains normal cristae morphology and complex I respiration activity, promotes antiapoptotic activity and protects mitochondria from the accumulation of oxidatively damaged membrane proteins. Required to control the accumulation of nonassembled respiratory chain subunits such as ND-30. The protein is ATP-dependent zinc metalloprotease YME1L of Drosophila melanogaster (Fruit fly).